The chain runs to 376 residues: Chaperone protein DnaJ (376 aa).

One can recognise a J domain in the interval 5 to 70; that stretch reads DYYEILGVSK…QKRAAYDQYG (66 aa). Residues 131–209 form a CR-type zinc finger; the sequence is GVTKEIRIPT…CHGHGRVERS (79 aa). Zn(2+) contacts are provided by C144, C147, C161, C164, C183, C186, C197, and C200. 4 CXXCXGXG motif repeats span residues 144–151, 161–168, 183–190, and 197–204; these read CDVCHGSG, CPTCHGSG, CPHCQGRG, and CNKCHGHG.

Belongs to the DnaJ family. Homodimer. It depends on Zn(2+) as a cofactor.

The protein localises to the cytoplasm. In terms of biological role, participates actively in the response to hyperosmotic and heat shock by preventing the aggregation of stress-denatured proteins and by disaggregating proteins, also in an autonomous, DnaK-independent fashion. Unfolded proteins bind initially to DnaJ; upon interaction with the DnaJ-bound protein, DnaK hydrolyzes its bound ATP, resulting in the formation of a stable complex. GrpE releases ADP from DnaK; ATP binding to DnaK triggers the release of the substrate protein, thus completing the reaction cycle. Several rounds of ATP-dependent interactions between DnaJ, DnaK and GrpE are required for fully efficient folding. Also involved, together with DnaK and GrpE, in the DNA replication of plasmids through activation of initiation proteins. This Escherichia coli O157:H7 (strain EC4115 / EHEC) protein is Chaperone protein DnaJ.